The following is a 659-amino-acid chain: RNA polymerase II subunit A C-terminal domain phosphatase (659 aa).

One can recognise an FCP1 homology domain in the interval 139 to 303 (ITNRKLVLLV…KNSKEQMPVQ (165 aa)). The BRCT domain maps to 351–443 (ERHKVLDGCV…LKADENLFQL (93 aa)). Residues 484 to 504 (ALSDDEDDGDNEDEDDDGNDV) are compositionally biased toward acidic residues. The tract at residues 484–640 (ALSDDEDDGD…PESDDDDEFE (157 aa)) is disordered. Residues 505 to 519 (GEDKGDENLEEKQEK) are compositionally biased toward basic and acidic residues. Positions 529 to 538 (QNGSVENQSG) are enriched in polar residues. 3 stretches are compositionally biased toward acidic residues: residues 560–576 (MEDE…DDDT), 596–607 (ENEDDAVFDVDD), and 616–640 (IDEE…DEFE).

Its subcellular location is the nucleus. It catalyses the reaction O-phospho-L-seryl-[protein] + H2O = L-seryl-[protein] + phosphate. It carries out the reaction O-phospho-L-threonyl-[protein] + H2O = L-threonyl-[protein] + phosphate. During the late stages of oogenesis, dephosphorylates 'Ser-5' of the heptad repeats YSPTSPS in the C-terminal domain of the largest RNA polymerase II subunit ama-1. Similarly, dephosphorylates 'Ser-5' of ama-1 in early embryonic cells prior to the activation of the zygotic transcription program at the 4-cell embryonic stage. May dephosphorylate 'Ser-2' of the ama-1 heptad repeats YSPTSPS in embryonic somatic and germline cells. The sequence is that of RNA polymerase II subunit A C-terminal domain phosphatase from Caenorhabditis elegans.